The chain runs to 368 residues: Cobalt-precorrin-5B C(1)-methyltransferase (368 aa).

It belongs to the CbiD family.

The enzyme catalyses Co-precorrin-5B + S-adenosyl-L-methionine = Co-precorrin-6A + S-adenosyl-L-homocysteine. It participates in cofactor biosynthesis; adenosylcobalamin biosynthesis; cob(II)yrinate a,c-diamide from sirohydrochlorin (anaerobic route): step 6/10. Its function is as follows. Catalyzes the methylation of C-1 in cobalt-precorrin-5B to form cobalt-precorrin-6A. This Brucella anthropi (strain ATCC 49188 / DSM 6882 / CCUG 24695 / JCM 21032 / LMG 3331 / NBRC 15819 / NCTC 12168 / Alc 37) (Ochrobactrum anthropi) protein is Cobalt-precorrin-5B C(1)-methyltransferase.